A 236-amino-acid polypeptide reads, in one-letter code: Small ribosomal subunit protein uS2c (236 aa).

Belongs to the universal ribosomal protein uS2 family.

Its subcellular location is the plastid. The protein resides in the chloroplast. The chain is Small ribosomal subunit protein uS2c (rps2) from Draba nemorosa (Woodland whitlowgrass).